The following is a 595-amino-acid chain: Beta-(1--&gt;2)glucan export ATP-binding/permease protein NdvA (595 aa).

Helical transmembrane passes span Phe21–Leu41, Leu56–Val76, Ile129–Pro149, Leu158–Gln178, and Ile252–Val272. The region spanning Phe21–Ser301 is the ABC transmembrane type-1 domain. The region spanning Ile335 to Arg569 is the ABC transporter domain. Gly368–Thr375 contributes to the ATP binding site.

It belongs to the ABC transporter superfamily. Beta-(1--&gt;2)glucan exporter (TC 3.A.1.108.1) family. In terms of assembly, homodimer.

It is found in the cell inner membrane. The enzyme catalyses [(1-&gt;2)-beta-D-glucosyl](n)(in) + ATP + H2O = [(1-&gt;2)-beta-D-glucosyl](n)(out) + ADP + phosphate + H(+). In terms of biological role, involved in beta-(1--&gt;2)glucan export. Transmembrane domains (TMD) form a pore in the inner membrane and the ATP-binding domain (NBD) is responsible for energy generation. The polypeptide is Beta-(1--&gt;2)glucan export ATP-binding/permease protein NdvA (Bartonella bacilliformis).